The primary structure comprises 249 residues: Neurotrophic factor BDNF precursor form (249 aa).

The first 18 residues, 1 to 18, serve as a signal peptide directing secretion; it reads MTILFLTMVISYFGCMKA. The propeptide occupies 19–130; that stretch reads APMKEVNVHG…AANMSMRVRR (112 aa). A glycan (N-linked (GlcNAc...) asparagine) is linked at Asn-123. Cystine bridges form between Cys-143/Cys-210, Cys-188/Cys-239, and Cys-198/Cys-241.

Belongs to the NGF-beta family. Monomers and homodimers. Binds to NTRK2/TRKB. Can form heterodimers with other neurotrophin family members, such as NTF3 and NTF4 (in vitro), but the physiological relevance of this is not clear. BDNF precursor form: interacts with the heterodimer formed by NGFR and SORCS2. Mature BDNF has much lower affinity for the heterodimer formed by NGFR and SORCS2. In terms of processing, N-glycosylated and glycosulfated, contrary to mature BDNF. Post-translationally, mature BDNF is produced by proteolytic removal of the propeptide, catalyzed by a FURIN family member. In addition, the precursor form is proteolytically cleaved within the propeptide, but this is not an obligatory intermediate for the production of mature BDNF. Can be converted into mature BDNF by plasmin (PLG). In terms of tissue distribution, expressed in the dorsal root ganglion and the spinal cord (at protein level). Detected in brain, especially in brain cortex, hippocampus, midbrain and cerebellum.

The protein localises to the secreted. Important signaling molecule that activates signaling cascades downstream of NTRK2. During development, promotes the survival and differentiation of selected neuronal populations of the peripheral and central nervous systems. Participates in axonal growth, pathfinding and in the modulation of dendritic growth and morphology. Major regulator of synaptic transmission and plasticity at adult synapses in many regions of the CNS. The versatility of BDNF is emphasized by its contribution to a range of adaptive neuronal responses including long-term potentiation (LTP), long-term depression (LTD), certain forms of short-term synaptic plasticity, as well as homeostatic regulation of intrinsic neuronal excitability. Its function is as follows. Important signaling molecule that activates signaling cascades downstream of NTRK2. Activates signaling cascades via the heterodimeric receptor formed by NGFR and SORCS2. Signaling via NGFR and SORCS2 plays a role in synaptic plasticity and long-term depression (LTD). Binding to NGFR and SORCS2 promotes neuronal apoptosis. Promotes neuronal growth cone collapse. The sequence is that of Neurotrophic factor BDNF precursor form (Bdnf) from Mus musculus (Mouse).